The primary structure comprises 232 residues: 7-cyano-7-deazaguanine synthase (232 aa).

Residue 8–18 coordinates ATP; the sequence is FSGGQDSTTCL. Residues cysteine 188, cysteine 197, cysteine 200, and cysteine 203 each contribute to the Zn(2+) site.

This sequence belongs to the QueC family. It depends on Zn(2+) as a cofactor.

The enzyme catalyses 7-carboxy-7-deazaguanine + NH4(+) + ATP = 7-cyano-7-deazaguanine + ADP + phosphate + H2O + H(+). It participates in purine metabolism; 7-cyano-7-deazaguanine biosynthesis. Catalyzes the ATP-dependent conversion of 7-carboxy-7-deazaguanine (CDG) to 7-cyano-7-deazaguanine (preQ(0)). The protein is 7-cyano-7-deazaguanine synthase of Buchnera aphidicola subsp. Schizaphis graminum (strain Sg).